The following is an 82-amino-acid chain: MNKALFLCLVVLCAAVVFAAEDLQKAKHAPFKRGAQVCFCPGKVDRGDLWILRGDCPGGYGYTSNCYTWPNICCYPQSFSGR.

Residues 1–19 (MNKALFLCLVVLCAAVVFA) form the signal peptide. The propeptide occupies 20-31 (AEDLQKAKHAPF). 3 disulfide bridges follow: C38-C73, C40-C66, and C56-C74.

It belongs to the sea anemone type 3 (BDS) potassium channel toxin family. In terms of tissue distribution, weakly expressed in the ectodermal tissue from the distal and proximal tentacles, body wall, and oral disk.

It localises to the secreted. The protein resides in the nematocyst. Its function is as follows. Blocks Kv3 voltage-gated potassium channels. Reduces blood pressure. This Anemonia viridis (Snakelocks anemone) protein is Kappa-actitoxin-Avd4j.